The chain runs to 468 residues: uncharacterized protein (468 aa).

Residues 1–27 form the signal peptide; the sequence is MRKWYFILLAGVLTSVILAFVYDKTKA. PbH1 repeat units follow at residues 125 to 154, 156 to 185, 189 to 214, 216 to 238, 249 to 283, 284 to 305, 312 to 334, and 397 to 420; these read KHDI…YVSG, SSHI…AVYG, MKDI…VLNG, IDGF…DLIG, VRNG…YVDG, GHDI…EATS, ANAI…SIGG, and NEGN…WMWK.

It is found in the secreted. This is an uncharacterized protein from Bacillus subtilis (strain 168).